Consider the following 1379-residue polypeptide: MKAPTVLAPGILVLLLSLVQRSHGECKEALVKSEMNVNMKYQLPNFTAETPIQNVVLHGHHIYLGATNYIYVLNDKDLQKVSEFKTGPVLEHPDCLPCRDCSSKANSSGGVWKDNINMALLVDTYYDDQLISCGSVNRGTCQRHVLPPDNSADIQSEVHCMFSPEEESGQCPDCVVSALGAKVLLSEKDRFINFFVGNTINSSYPPGYSLHSISVRRLKETQDGFKFLTDQSYIDVLPEFLDSYPIKYIHAFESNHFIYFLTVQKETLDAQTFHTRIIRFCSVDSGLHSYMEMPLECILTEKRRKRSTREEVFNILQAAYVSKPGANLAKQIGASPSDDILFGVFAQSKPDSAEPVNRSAVCAFPIKYVNDFFNKIVNKNNVRCLQHFYGPNHEHCFNRTLLRNSSGCEARSDEYRTEFTTALQRVDLFMGRLNQVLLTSISTFIKGDLTIANLGTSEGRFMQVVLSRTAHLTPHVNFLLDSHPVSPEVIVEHPSNQNGYTLVVTGKKITKIPLNGLGCGHFQSCSQCLSAPYFIQCGWCHNQCVRFDECPSGTWTQEICLPAVYKVFPTSAPLEGGTVLTICGWDFGFRKNNKFDLRKTKVLLGNESCTLTLSESTTNTLKCTVGPAMSEHFNVSVIISNSRETTQYSAFSYVDPVITSISPRYGPQAGGTLLTLTGKYLNSGNSRHISIGGKTCTLKSVSDSILECYTPAQTTSDEFPVKLKIDLANRETSSFSYREDPVVYEIHPTKSFISGGSTITGIGKTLNSVSLPKLVIDVHEVGVNYTVACQHRSNSEIICCTTPSLKQLGLQLPLKTKAFFLLDGILSKHFDLTYVHNPVFEPFEKPVMISMGNENVVEIKGNNIDPEAVKGEVLKVGNQSCESLHWHSGAVLCTVPSDLLKLNSELNIEWKQAVSSTVLGKVIVQPDQNFAGLIIGAVSISVVVLLLSGLFLWMRKRKHKDLGSELVRYDARVHTPHLDRLVSARSVSPTTEMVSNESVDYRATFPEDQFPNSSQNGACRQVQYPLTDLSPILTSGDSDISSPLLQNTVHIDLSALNPELVQAVQHVVIGPSSLIVHFNEVIGRGHFGCVYHGTLLDNDGKKIHCAVKSLNRITDIEEVSQFLTEGIIMKDFSHPNVLSLLGICLRSEGSPLVVLPYMKHGDLRNFIRNETHNPTVKDLIGFGLQVAKGMKYLASKKFVHRDLAARNCMLDEKFTVKVADFGLARDMYDKEYYSVHNKTGAKLPVKWMALESLQTQKFTTKSDVWSFGVLLWELMTRGAPPYPDVNTFDITIYLLQGRRLLQPEYCPDALYEVMLKCWHPKAEMRPSFSELVSRISSIFSTFIGEHYVHVNATYVNVKCVAPYPSLLPSQDNIDGEGNT.

The signal sequence occupies residues 1 to 24; it reads MKAPTVLAPGILVLLLSLVQRSHG. Residues 25–931 are Extracellular-facing; it reads ECKEALVKSE…VIVQPDQNFA (907 aa). The Sema domain maps to 27-514; that stretch reads KEALVKSEMN…TGKKITKIPL (488 aa). The N-linked (GlcNAc...) asparagine glycan is linked to N45. 4 disulfide bridges follow: C95/C101, C98/C160, C133/C141, and C171/C174. N-linked (GlcNAc...) asparagine glycosylation is present at N106. N-linked (GlcNAc...) asparagine glycans are attached at residues N201 and N357. 2 disulfide bridges follow: C297-C362 and C384-C396. Residues N398 and N404 are each glycosylated (N-linked (GlcNAc...) asparagine). Intrachain disulfides connect C519/C537, C525/C560, C528/C544, and C540/C550. IPT/TIG domains are found at residues 562–654, 656–738, and 741–835; these read PAVY…FSYV, PVIT…FSYR, and PVVY…LTYV. O-linked (Man) threonine glycosylation is present at T581. 2 N-linked (GlcNAc...) asparagine glycosylation sites follow: N606 and N634. O-linked (Man) threonine glycans are attached at residues T675 and T760. N-linked (GlcNAc...) asparagine glycosylation is found at N784 and N878. The chain crosses the membrane as a helical span at residues 932-954; it reads GLIIGAVSISVVVLLLSGLFLWM. Topologically, residues 955-1379 are cytoplasmic; it reads RKRKHKDLGS…QDNIDGEGNT (425 aa). S964 is subject to Phosphoserine. T975 is subject to Phosphothreonine. A phosphoserine mark is found at S988, S995, and S998. A Phosphotyrosine modification is found at Y1001. The region spanning 1076-1343 is the Protein kinase domain; that stretch reads VHFNEVIGRG…RISSIFSTFI (268 aa). ATP contacts are provided by residues 1082 to 1090 and K1108; that span reads IGRGHFGCV. D1202 (proton acceptor) is an active-site residue. The segment at 1210–1379 is interaction with RANBP9; it reads LDEKFTVKVA…QDNIDGEGNT (170 aa). A Phosphotyrosine modification is found at Y1228. Phosphotyrosine; by autocatalysis occurs at positions 1232 and 1233. T1287 carries the post-translational modification Phosphothreonine. Residues 1318–1357 are interaction with MUC20; the sequence is WHPKAEMRPSFSELVSRISSIFSTFIGEHYVHVNATYVNV. Phosphotyrosine; by autocatalysis occurs at positions 1347 and 1354. Y1363 bears the Phosphotyrosine mark.

It belongs to the protein kinase superfamily. Tyr protein kinase family. Heterodimer made of an alpha chain (50 kDa) and a beta chain (145 kDa) which are disulfide linked. Binds PLXNB1. Interacts when phosphorylated with downstream effectors including STAT3, PIK3R1, SRC, PCLG1, GRB2 and GAB1. When phosphorylated at Tyr-1354, interacts with INPPL1/SHIP2. Interacts with RANBP9 and RANBP10. Interacts with INPP5D/SHIP1. Interacts with SPSB1, SPSB2, SPSB4 and probably SPSB3. SPSB1 binding occurs in the presence and in the absence of HGF, however HGF treatment has a positive effect on this interaction. Interacts with MUC20; prevents interaction with GRB2 and suppresses hepatocyte growth factor-induced cell proliferation. Interacts with GRB10. Interacts with PTPN1 and PTPN2. Interacts with HSP90AA1 and HSP90AB1; the interaction suppresses MET kinase activity. Interacts with tensin TNS3. Interacts (when phosphorylated) with tensin TNS4 (via SH2 domain); the interaction increases MET protein stability by inhibiting MET endocytosis and subsequent lysosomal degradation. As to quaternary structure, (Microbial infection) Interacts with L.monocytogenes InlB. InlB probably dimerizes upon binding to MET, which encourages subsequent dimerization of MET. Post-translationally, autophosphorylated in response to ligand binding on Tyr-1232 and Tyr-1233 in the kinase domain leading to further phosphorylation of Tyr-1347 and Tyr-1354 in the C-terminal multifunctional docking site. Dephosphorylated by PTPRJ at Tyr-1347 and Tyr-1363. Dephosphorylated by PTPN1 and PTPN2. Ubiquitinated. Ubiquitination by CBL regulates MET endocytosis, resulting in decreasing plasma membrane receptor abundance, and in endosomal degradation and/or recycling of internalized receptors. In terms of processing, O-mannosylation of IPT/TIG domains by TMEM260 is required for protein maturation. O-mannosylated residues are composed of single mannose glycans that are not elongated or modified. Post-translationally, (Microbial infection) Tyrosine phosphorylation is stimulated by L.monocytogenes InlB.

Its subcellular location is the membrane. It catalyses the reaction L-tyrosyl-[protein] + ATP = O-phospho-L-tyrosyl-[protein] + ADP + H(+). Its activity is regulated as follows. In its inactive state, the C-terminal tail interacts with the catalytic domain and inhibits the kinase activity. Upon ligand binding, the C-terminal tail is displaced and becomes phosphorylated, thus increasing the kinase activity. Its function is as follows. Receptor tyrosine kinase that transduces signals from the extracellular matrix into the cytoplasm by binding to hepatocyte growth factor/HGF ligand. Regulates many physiological processes including proliferation, scattering, morphogenesis and survival. Ligand binding at the cell surface induces autophosphorylation of MET on its intracellular domain that provides docking sites for downstream signaling molecules. Following activation by ligand, interacts with the PI3-kinase subunit PIK3R1, PLCG1, SRC, GRB2, STAT3 or the adapter GAB1. Recruitment of these downstream effectors by MET leads to the activation of several signaling cascades including the RAS-ERK, PI3 kinase-AKT, or PLCgamma-PKC. The RAS-ERK activation is associated with the morphogenetic effects while PI3K/AKT coordinates prosurvival effects. During embryonic development, MET signaling plays a role in gastrulation, development and migration of neuronal precursors, angiogenesis and kidney formation. During skeletal muscle development, it is crucial for the migration of muscle progenitor cells and for the proliferation of secondary myoblasts. In adults, participates in wound healing as well as organ regeneration and tissue remodeling. Also promotes differentiation and proliferation of hematopoietic cells. May regulate cortical bone osteogenesis. Functionally, (Microbial infection) Acts as a receptor for Listeria monocytogenes internalin InlB, mediating entry of the pathogen into cells. In Mus musculus (Mouse), this protein is Hepatocyte growth factor receptor (Met).